Reading from the N-terminus, the 170-residue chain is Odorant-binding protein 2b (170 aa).

A signal peptide spans 1 to 15 (MKTLFLGVTLGLAAA). A disulfide bond links cysteine 74 and cysteine 166.

This sequence belongs to the calycin superfamily. Lipocalin family. In terms of tissue distribution, strongly expressed in genital sphere organs such as the prostate and mammary glands.

It localises to the secreted. Its function is as follows. Probably binds and transports small hydrophobic volatile molecules. The protein is Odorant-binding protein 2b (OBP2B) of Homo sapiens (Human).